The sequence spans 431 residues: Gamma-glutamyl phosphate reductase (431 aa).

It belongs to the gamma-glutamyl phosphate reductase family.

It localises to the cytoplasm. The catalysed reaction is L-glutamate 5-semialdehyde + phosphate + NADP(+) = L-glutamyl 5-phosphate + NADPH + H(+). The protein operates within amino-acid biosynthesis; L-proline biosynthesis; L-glutamate 5-semialdehyde from L-glutamate: step 2/2. In terms of biological role, catalyzes the NADPH-dependent reduction of L-glutamate 5-phosphate into L-glutamate 5-semialdehyde and phosphate. The product spontaneously undergoes cyclization to form 1-pyrroline-5-carboxylate. This is Gamma-glutamyl phosphate reductase from Beijerinckia indica subsp. indica (strain ATCC 9039 / DSM 1715 / NCIMB 8712).